A 1366-amino-acid polypeptide reads, in one-letter code: ABC multidrug transporter MDR2 (1366 aa).

Residues 52–72 (IALIVIGTIAGIGAGIPFPLL) form a helical membrane-spanning segment. The region spanning 56 to 354 (VIGTIAGIGA…MAPFMHIFAS (299 aa)) is the ABC transmembrane type-1 1 domain. N-linked (GlcNAc...) asparagine glycosylation is present at Asn-84. Helical transmembrane passes span 106–126 (VLQV…HTGC), 180–200 (KVGL…VAFL), 202–222 (VATI…MAFG), 288–308 (IQFG…FWQG), and 323–343 (VSVG…FVLS). Residues 390–669 (IELQDVTFNY…DGVYAGMVRL (280 aa)) enclose the ABC transporter 1 domain. Residue 425–432 (GTSGSGKS) coordinates ATP. Residue Asn-620 is glycosylated (N-linked (GlcNAc...) asparagine). A disordered region spans residues 727 to 746 (PEEADSLPTEPEAKKEKPKQ). A run of 4 helical transmembrane segments spans residues 768–788 (LGLI…VIFG), 807–827 (GMLF…AVIV), 868–888 (LLVA…GTTI), and 898–918 (LFAG…VLLA). Residues 768–1055 (LGLITSIMIG…MFALVPDISK (288 aa)) enclose the ABC transmembrane type-1 2 domain. Asn-976 carries N-linked (GlcNAc...) asparagine glycosylation. 2 helical membrane-spanning segments follow: residues 995–1015 (FWLS…YWWG) and 1019–1039 (ILAG…LLFS). Positions 1122–1361 (VQFRNVHFRY…CESYRANVIH (240 aa)) constitute an ABC transporter 2 domain. 1157-1164 (GPSGSGKS) lines the ATP pocket.

The protein belongs to the ABC transporter superfamily. ABCB family. Multidrug resistance exporter (TC 3.A.1.201) subfamily.

It localises to the cell membrane. Its function is as follows. Pleiotropic ABC efflux transporter that may be involved in the modulation susceptibility to a wide range of unrelated cytotoxic compounds. Does not act as an efflux pump for azoles, including fluconazole, itraconazole, ketoconazole, miconazole and voriconazole, nor does it modulate susceptibility to cycloheximide. The polypeptide is ABC multidrug transporter MDR2 (Trichophyton rubrum (strain ATCC MYA-4607 / CBS 118892) (Athlete's foot fungus)).